The following is a 97-amino-acid chain: Coiled-coil domain-containing protein 167 (97 aa).

Residues 10 to 79 (GVALEIDGLE…LRQENRKNML (70 aa)) adopt a coiled-coil conformation. Residues 78–95 (MLLSVAIFILLTLVYAYW) traverse the membrane as a helical segment.

Its subcellular location is the membrane. This Homo sapiens (Human) protein is Coiled-coil domain-containing protein 167 (CCDC167).